A 310-amino-acid polypeptide reads, in one-letter code: Atrochrysone carboxyl ACP thioesterase CPUR_05436 (310 aa).

Positions 105, 107, 109, and 110 each coordinate Zn(2+). Catalysis depends on Asp-109, which acts as the Proton donor/acceptor.

Belongs to the metallo-beta-lactamase superfamily. Requires Zn(2+) as cofactor.

The enzyme catalyses atrochrysone carboxyl-[ACP] + H2O = atrochrysone carboxylate + holo-[ACP] + H(+). The protein operates within pigment biosynthesis. Its function is as follows. Atrochrysone carboxyl ACP thioesterase; part of the ergochrome gene cluster responsible for the typical purple-black color of the ergot sclerotia. The ergochrome gene cluster produces several ergot pigments including the yellow ergochrome secalonic acid and its derivatives, as well as the red anthraquinones endocrocin and clavorubin. The pathway begins with the synthesis of atrochrysone thioester by the polyketide synthase (PKS) CPUR_05437. The atrochrysone carboxyl ACP thioesterase CPUR_05436 then breaks the thioester bond and releases the atrochrysone carboxylic acid from CPUR_05437. The atrochrysone carboxylic acid is then converted to atrochrysone which is further transformed into emodin anthrone. The next step is performed by the anthrone oxygenase CPUR_05434 that catalyzes the oxidation of emodinanthrone to emodin. Emodin is further modified to yield monodictyphenone via several steps involving CPUR_05427, CPUR_05428, CPUR_05429 and CPUR_05430. The short chain dehydrogenase/reductase CPUR_05418 then catalyzes the C-5 ketoreduction to give the xanthone skeleton of the monomeric units. Ergochromes formation requires further dimerization steps of different xanthone units, probably catalyzed by the cytochrome P450 monooxygenase CPUR_05419. CPUR_05425, CPUR_05426 and CPUR_05431 are unique to Claviceps, thus it is likely that they are involved in further modification of xanthone units or in their dimerization. The yellow ergochromes and the red anthraquinone pigments endocrocin and clavorubin are products from the same PKS derived precursors and the latter are likely shunt products in the pathway of xanthone biosynthesis. It is proposed that atrochrysone carboxylic acid released from the PKS CPUR_05437 can also be converted to endocrocin anthrone which is further oxidized into endocrocin by CPUR_05435. Endocrocin could be then modified to clavorubin, possibly by CPUR_05423 and CPUR_05431. Clavorubin is the principal anthraquinone metabolite produced by the cluster with a much higher yield compared to endocrocin. This chain is Atrochrysone carboxyl ACP thioesterase CPUR_05436, found in Claviceps purpurea (strain 20.1) (Ergot fungus).